The primary structure comprises 435 residues: Serine--tRNA ligase (435 aa).

238 to 240 lines the L-serine pocket; sequence TAE. 269–271 contributes to the ATP binding site; the sequence is RAE. E292 lines the L-serine pocket. 356 to 359 lines the ATP pocket; that stretch reads EISS. S392 contacts L-serine.

It belongs to the class-II aminoacyl-tRNA synthetase family. Type-1 seryl-tRNA synthetase subfamily. In terms of assembly, homodimer. The tRNA molecule binds across the dimer.

The protein localises to the cytoplasm. The enzyme catalyses tRNA(Ser) + L-serine + ATP = L-seryl-tRNA(Ser) + AMP + diphosphate + H(+). It catalyses the reaction tRNA(Sec) + L-serine + ATP = L-seryl-tRNA(Sec) + AMP + diphosphate + H(+). The protein operates within aminoacyl-tRNA biosynthesis; selenocysteinyl-tRNA(Sec) biosynthesis; L-seryl-tRNA(Sec) from L-serine and tRNA(Sec): step 1/1. Catalyzes the attachment of serine to tRNA(Ser). Is also able to aminoacylate tRNA(Sec) with serine, to form the misacylated tRNA L-seryl-tRNA(Sec), which will be further converted into selenocysteinyl-tRNA(Sec). This Methylobacterium sp. (strain 4-46) protein is Serine--tRNA ligase.